Consider the following 164-residue polypeptide: Transcriptional repressor NrdR (164 aa).

Residues 3-34 (CPFCRHEDSRVVDSRSLDDGSAIRRRRQCQAC) fold into a zinc finger. An ATP-cone domain is found at 46–136 (LTVVKRSGVA…VYRDFESLDD (91 aa)).

Belongs to the NrdR family. It depends on Zn(2+) as a cofactor.

Functionally, negatively regulates transcription of bacterial ribonucleotide reductase nrd genes and operons by binding to NrdR-boxes. The polypeptide is Transcriptional repressor NrdR (Micrococcus luteus (strain ATCC 4698 / DSM 20030 / JCM 1464 / CCM 169 / CCUG 5858 / IAM 1056 / NBRC 3333 / NCIMB 9278 / NCTC 2665 / VKM Ac-2230) (Micrococcus lysodeikticus)).